The following is a 233-amino-acid chain: MNSSVSTHGTGDCPVNCTKSEDFAPSKLGTKEYWDGAYKRELQTYKDIGDVGEIWFGEESMHRVIRWMEAQNISENAAILDIGTGNGMFLVELARHGFSNLTGIDYSKAALELTTNILVEEGLKNINIQVEDFLNPSTELKGFDVCIDKGTFDAISLNPEDREEAKKHYVTSLRAVMRPNGFFIITSCNWTKEQLLEIFKPGFELVRELPTPNFQFGGVTGNSVTALVFKQTD.

Belongs to the class I-like SAM-binding methyltransferase superfamily. EFM4 family.

It is found in the cytoplasm. Its subcellular location is the nucleus. It catalyses the reaction L-lysyl-[protein] + 3 S-adenosyl-L-methionine = N(6),N(6),N(6)-trimethyl-L-lysyl-[protein] + 3 S-adenosyl-L-homocysteine + 3 H(+). In terms of biological role, protein-lysine methyltransferase that selectively catalyzes the trimethylation of EEF1A at 'Lys-318'. The sequence is that of EEF1A lysine methyltransferase 2 from Danio rerio (Zebrafish).